Here is an 83-residue protein sequence, read N- to C-terminus: Small ribosomal subunit protein uS17 (83 aa).

Belongs to the universal ribosomal protein uS17 family. In terms of assembly, part of the 30S ribosomal subunit.

Functionally, one of the primary rRNA binding proteins, it binds specifically to the 5'-end of 16S ribosomal RNA. The protein is Small ribosomal subunit protein uS17 of Ehrlichia canis (strain Jake).